The sequence spans 1904 residues: Pericentriolar material 1 protein (1904 aa).

7 disordered regions span residues 1-135 (MATG…SGEP), 159-179 (QEDG…PQQE), 265-303 (HDSQ…QSDE), 338-361 (NSSF…TSAA), 376-407 (NSLA…EKLQ), 430-489 (SDMM…GTNN), and 520-559 (CHNR…LGDV). Basic and acidic residues predominate over residues 43 to 60 (RSSEKNKKKLGGEAETRL). A compositionally biased stretch (polar residues) spans 107 to 118 (INFSDLDQINTN). Residues 171 to 212 (SQARDPQQEAKEELENLKKQHDLLKRMLQQQEQLKALQGRQA) are a coiled coil. Residues 280–298 (ESLSLTREISQSRNSSVSE) are compositionally biased toward polar residues. The stretch at 301 to 334 (SDEKAQLFNKMRMLQGKKQKMDKLLGELHTLRDQ) forms a coiled coil. Over residues 338–348 (NSSFFPASSSP) the composition is skewed to low complexity. A compositionally biased stretch (polar residues) spans 349 to 361 (QRSIDQRSTTSAA). The stretch at 403-429 (TEKLQKLNEVRKRLNELRELVHYYEQT) forms a coiled coil. A compositionally biased stretch (acidic residues) spans 442 to 452 (KEEEETEDSGS). The span at 461–470 (PVTNIRNPQG) shows a compositional bias: polar residues. The span at 471-482 (ISSWSEINSNSN) shows a compositional bias: low complexity. A compositionally biased stretch (basic and acidic residues) spans 520 to 534 (CHNREDDKHADLPHG). Positions 535-544 (EDDEVEEDRA) are enriched in acidic residues. Coiled coils occupy residues 562–592 (DAEF…VQDD) and 636–686 (LNEK…LQSA). A disordered region spans residues 686 to 706 (AGLGNSPANRQTSPATSTPAM). Residues 687–706 (GLGNSPANRQTSPATSTPAM) are compositionally biased toward polar residues. Residues 731 to 768 (SEMRRHEILREELRRRRKQLEALMAEHQRRRELAETIS) adopt a coiled-coil conformation. The interval 773–840 (SVKSEGSEAQ…PSMNDSFSAY (68 aa)) is disordered. Over residues 779–804 (SEAQRTPQQSRTENRTMATWGGSTQC) the composition is skewed to polar residues. The span at 806 to 830 (LDEEDGDEDGYLSDGLDQAEEEEDA) shows a compositional bias: acidic residues. Coiled-coil stretches lie at residues 895–927 (SELS…CQTL) and 970–1000 (TQLS…CQEK). 3 disordered regions span residues 991-1018 (HQQE…SPVF), 1063-1082 (GFPQ…ASGK), and 1088-1225 (FPKP…TGYD). Polar residues-rich tracts occupy residues 1064-1073 (FPQSSEQQQH) and 1093-1102 (ESSSSTGAEN). The span at 1103 to 1117 (QRSHRQPEDEVEKRS) shows a compositional bias: basic and acidic residues. Residues 1141–1150 (SVQSIASGHK) are compositionally biased toward polar residues. The span at 1151–1162 (NQSDTSRRRNFD) shows a compositional bias: basic and acidic residues. Low complexity predominate over residues 1173 to 1182 (PDPVDPTTVT). The stretch at 1421–1447 (IHLDQALARMREYERMKIEAESTLDSE) forms a coiled coil. Residues 1616-1625 (AKEDKDETET) are compositionally biased toward basic and acidic residues. 3 disordered regions span residues 1616-1741 (AKED…VKGE), 1774-1838 (MKTE…SDED), and 1865-1904 (EAQT…AQSA). Over residues 1649–1658 (SDQEEDEESE) the composition is skewed to acidic residues. A compositionally biased stretch (polar residues) spans 1668 to 1678 (KAETQALTNYG). Residues 1680–1695 (GEDENEDEEIEFEEGP) show a composition bias toward acidic residues. 3 stretches are compositionally biased toward polar residues: residues 1698-1720 (VQTS…SQEL), 1728-1737 (ILSSEQQSVN), and 1779-1791 (SSSS…TQML). Residues 1800–1812 (SSAGSSESSMAGS) show a composition bias toward low complexity. The span at 1881-1897 (EQDRELVGDAQTLKEPE) shows a compositional bias: basic and acidic residues.

The protein belongs to the PCM1 family. As to quaternary structure, self-associates.

Its subcellular location is the cytoplasm. The protein localises to the cytoskeleton. The protein resides in the microtubule organizing center. It localises to the centrosome. It is found in the cytoplasmic granule. Its subcellular location is the centriolar satellite. The protein localises to the cilium basal body. Functionally, required for centrosome assembly and function. Essential for the correct localization of several centrosomal proteins including CETN3 and PCNT. Required to anchor microtubules to the centrosome. Probably involved in the biogenesis of cilia. The protein is Pericentriolar material 1 protein (PCM1) of Gallus gallus (Chicken).